The chain runs to 233 residues: Large ribosomal subunit protein uL1 (233 aa).

The protein belongs to the universal ribosomal protein uL1 family. As to quaternary structure, part of the 50S ribosomal subunit.

Binds directly to 23S rRNA. The L1 stalk is quite mobile in the ribosome, and is involved in E site tRNA release. In terms of biological role, protein L1 is also a translational repressor protein, it controls the translation of the L11 operon by binding to its mRNA. The polypeptide is Large ribosomal subunit protein uL1 (Vibrio campbellii (strain ATCC BAA-1116)).